The primary structure comprises 2035 residues: Host cell factor 1 (2035 aa).

A2 is subject to N-acetylalanine. S6 bears the Phosphoserine mark. Kelch repeat units lie at residues 44–89 (LIVV…GFVC), 93–140 (RLLV…RLGH), 148–194 (KCYL…ITYG), 217–265 (KLVI…TIGN), and 266–313 (KMYV…LMDT). Glycyl lysine isopeptide (Lys-Gly) (interchain with G-Cter in ubiquitin) cross-links involve residues K105, K163, and K244. K282 participates in a covalent cross-link: Glycyl lysine isopeptide (Lys-Gly) (interchain with G-Cter in SUMO2). K288 carries the post-translational modification N6-acetyllysine. A Glycyl lysine isopeptide (Lys-Gly) (interchain with G-Cter in ubiquitin) cross-link involves residue K363. The Fibronectin type-III 1 domain occupies 366 to 466 (PPARVQLVRA…TTTTIQVLPT (101 aa)). The disordered stretch occupies residues 407–434 (ATATSPTPNPVPSVPANPPKSPAPAAAA). S411 is subject to Phosphoserine. The span at 413–428 (TPNPVPSVPANPPKSP) shows a compositional bias: pro residues. A required for interaction with OGT region spans residues 500-550 (LVTMRPASQAGKAPVTVTSLPAGVRMVVPTQSAQGTVIGSSPQMSGMAALA). R504 and R524 each carry omega-N-methylarginine. Residues S598, S666, and S669 each carry the phosphoserine modification. Residues 610 to 722 (LKTAAAQVGT…KGPLPAGTIL (113 aa)) form an interaction with SIN3A region. The interaction with ZBTB17 stretch occupies residues 750 to 902 (ILGISSVSPS…SLAGAGGHST (153 aa)). At K813 the chain carries N6-acetyllysine. Residues 813–912 (KIITAVPKIA…SASLATPITT (100 aa)) form an interaction with GABP2 region. HCF repeat repeat units follow at residues 1010–1035 (TLVC…TVVA), 1072–1097 (VRVC…ATSN), and 1101–1126 (QHGC…AMSS). One copy of the HCF repeat 4; degenerate repeat lies at 1158-1183 (AAQGSKSQCQTRQTSATSTTMTVMAT). S1205 bears the Phosphoserine mark. Omega-N-methylarginine is present on R1219. S1224 is subject to Phosphoserine. HCF repeat repeat units follow at residues 1286 to 1311 (TQVC…SNAG) and 1314 to 1339 (QRVC…ATSN). Disordered regions lie at residues 1292-1371 (PPCE…TMSV), 1435-1470 (TVTS…TSSS), and 1487-1515 (VTQS…QQLP). Low complexity-rich tracts occupy residues 1299–1312 (TGTT…NAGS), 1329–1339 (TTHTATTATSN), and 1362–1371 (TTSTGTTMSV). The HCF repeat 7; degenerate repeat unit spans residues 1349 to 1374 (QQPPAGRPCETHQTTSTGTTMSVSVG). The HCF repeat 8 repeat unit spans residues 1414 to 1439 (QRVCSNPPCETHETGTTHTATTVTSN). Phosphothreonine is present on T1491. Residues 1493–1502 (VPGPSVPPPE) show a composition bias toward pro residues. A phosphoserine mark is found at S1497, S1507, and S1771. 2 consecutive Fibronectin type-III domains span residues 1797–1888 (LPPP…TCLP) and 1890–2006 (FPGA…TSKD). Residues K1807 and K1808 each participate in a glycyl lysine isopeptide (Lys-Gly) (interchain with G-Cter in ubiquitin) cross-link. S1838 bears the Phosphoserine mark. Residues 1994 to 2035 (ATQVRWLQETSKDSSGTKPANKRPMSSPEMKSAPKKSKADGQ) form a disordered region. N6-acetyllysine is present on K2005. K2024 is covalently cross-linked (Glycyl lysine isopeptide (Lys-Gly) (interchain with G-Cter in SUMO2)).

In terms of assembly, composed predominantly of six polypeptides ranging from 110 to 150 kDa and a minor 300 kDa polypeptide. The majority of N- and C-terminal cleavage products remain tightly, albeit non-covalently, associated. Interacts with POU2F1, CREB3, ZBTB17, EGR2, E2F4, CREBZF, SP1, GABP2, Sin3 HDAC complex (SIN3A, HDAC1, HDAC2, SUDS3), SAP30, SIN3B and FHL2. Component of a MLL1 complex, composed of at least the core components KMT2A/MLL1, ASH2L, HCFC1, WDR5 and RBBP5, as well as the facultative components BACC1, CHD8, DPY30, E2F6, HCFC2, HSP70, INO80C, KANSL1, LAS1L, MAX, MCRS1, MEN1, MGA, KAT8, PELP1, PHF20, PRP31, RING2, RUVBL1, RUVBL2, SENP3, TAF1, TAF4, TAF6, TAF7, TAF9 and TEX10. Component of a THAP1/THAP3-HCFC1-OGT complex that is required for the regulation of the transcriptional activity of RRM1. Interacts directly with THAP3 (via its HBM). Interacts (via the Kelch-repeat domain) with THAP1 (via the HBM); the interaction recruits HCHC1 to the RRM1. Interacts with THAP7 and THAP11 (via the HMB). Interacts directly with OGT; the interaction, which requires the HCFC1 cleavage site domain, glycosylates and promotes the proteolytic processing of HCFC1, retains OGT in the nucleus and impacts the expression of herpes simplex virus immediate early viral genes. Component of the SET1 complex, at least composed of the catalytic subunit (SETD1A or SETD1B), WDR5, WDR82, RBBP5, ASH2L, CXXC1, HCFC1 and DPY30. Component of the NSL complex at least composed of MOF/KAT8, KANSL1, KANSL2, KANSL3, MCRS1, PHF20, OGT1/OGT, WDR5 and HCFC1. Component of a complex at least composed of ZNF335, HCFC1, CCAR2, EMSY, MKI67, RBBP5, ASH2L and WDR5; the complex is formed as a result of interactions between components of a nuclear receptor-mediated transcription complex and a histone methylation complex. Within the complex interacts with ZNF335. Interacts with TET2 and TET3. Interacts with HCFC1R1. Interacts with THAP11. Interacts (via Kelch domain) with KMT2E/MLL5 isoform 3 (via HBM motif). Interacts with E2F1. Accessory scaffold component of the polycomb repressive deubiquitinase (PR-DUB) complex, at least composed of BAP1, one of ASXL1, ASXL2 or (probably) ASXL3 and one of MBD5 or MBD6; the PR-DUB core associates with a number of accessory proteins, including FOXK1, FOXK2, KDM1B, HCFC1, YY1 and OGT. Interacts with YY1 (via Gly-rich region); the interaction is direct. Interacts with BAP1 (via HBM-like motif). As to quaternary structure, (Microbial infection) Associates with the VP16-induced complex; binding to HCFC1 activates the viral transcriptional activator VP16 for association with POU2F1, to form a multiprotein-DNA complex responsible for activating transcription of the viral immediate early genes. Interacts with the viral transactivator protein VP16. Proteolytically cleaved at one or several PPCE--THET sites within the HCF repeats. Further cleavage of the primary N- and C-terminal chains results in a 'trimming' and accumulation of the smaller chains. Cleavage is promoted by O-glycosylation. In terms of processing, O-glycosylated. GlcNAcylation by OGT promotes proteolytic processing. Post-translationally, ubiquitinated. Lys-1807 and Lys-1808 are ubiquitinated both via 'Lys-48'- and 'Lys-63'-linked polyubiquitin chains. BAP1 mediated deubiquitination of 'Lys-48'-linked polyubiquitin chains; deubiquitination by BAP1 does not seem to stabilize the protein. As to expression, highly expressed in fetal tissues and the adult kidney. Present in all tissues tested.

The protein resides in the cytoplasm. Its subcellular location is the nucleus. Transcriptional coregulator. Serves as a scaffold protein, bridging interactions between transcription factors, including THAP11 and ZNF143, and transcriptional coregulators. Involved in control of the cell cycle. Also antagonizes transactivation by ZBTB17 and GABP2; represses ZBTB17 activation of the p15(INK4b) promoter and inhibits its ability to recruit p300. Coactivator for EGR2 and GABP2. Tethers the chromatin modifying Set1/Ash2 histone H3 'Lys-4' methyltransferase (H3K4me) and Sin3 histone deacetylase (HDAC) complexes (involved in the activation and repression of transcription, respectively) together. Component of a THAP1/THAP3-HCFC1-OGT complex that is required for the regulation of the transcriptional activity of RRM1. As part of the NSL complex it may be involved in acetylation of nucleosomal histone H4 on several lysine residues. Recruits KMT2E/MLL5 to E2F1 responsive promoters promoting transcriptional activation and thereby facilitates G1 to S phase transition. Modulates expression of homeobox protein PDX1, perhaps acting in concert with transcription factor E2F1, thereby regulating pancreatic beta-cell growth and glucose-stimulated insulin secretion. May negatively modulate transcriptional activity of FOXO3. Its function is as follows. (Microbial infection) In case of human herpes simplex virus (HSV) infection, HCFC1 forms a multiprotein-DNA complex with the viral transactivator protein VP16 and POU2F1 thereby enabling the transcription of the viral immediate early genes. This Homo sapiens (Human) protein is Host cell factor 1.